The following is a 145-amino-acid chain: Actin-related protein 4A (145 aa).

Residues Ile47–Lys66 form a disordered region. The segment covering Glu55–Lys64 has biased composition (basic and acidic residues).

The protein belongs to the actin family. ARP4 subfamily. Expressed in roots, leaves and flowers.

This Arabidopsis thaliana (Mouse-ear cress) protein is Actin-related protein 4A (ARP4A).